The chain runs to 566 residues: Arginine--tRNA ligase (566 aa).

Positions 123 to 133 match the 'HIGH' region motif; the sequence is PNIAKPFHIGH.

The protein belongs to the class-I aminoacyl-tRNA synthetase family. As to quaternary structure, monomer.

It localises to the cytoplasm. It carries out the reaction tRNA(Arg) + L-arginine + ATP = L-arginyl-tRNA(Arg) + AMP + diphosphate. This chain is Arginine--tRNA ligase, found in Halothermothrix orenii (strain H 168 / OCM 544 / DSM 9562).